The sequence spans 751 residues: Amyloid-beta precursor protein (751 aa).

The signal sequence occupies residues 1-17 (MLPGLALLLLAAWTARA). At 18-682 (LEVPTDGNAG…AEDVGSNKGA (665 aa)) the chain is on the extracellular side. The GFLD subdomain stretch occupies residues 28–123 (LLAEPQIAMF…PYRCLVGEFV (96 aa)). Residues 28–189 (LLAEPQIAMF…RGVEFVCCPL (162 aa)) form the E1 domain. 6 cysteine pairs are disulfide-bonded: Cys38–Cys62, Cys73–Cys117, Cys98–Cys105, Cys133–Cys187, Cys144–Cys174, and Cys158–Cys186. 96–110 (NWCKRDRKQCKTHPH) contacts heparin. Residues 131 to 189 (DKCKFLHQERMDVCETHLHWHTVAKETCSEKSTNLHDYGMLLPCGIDKFRGVEFVCCPL) form a cuBD subdomain region. Cu(2+) contacts are provided by His147, His151, and Tyr168. The zinc-binding stretch occupies residues 181-188 (GVEFVCCP). 3 residues coordinate Zn(2+): Glu183, Cys186, and Cys187. The tract at residues 195 to 284 (HVDSADAEED…TTTTTTESVE (90 aa)) is disordered. Residues Ser198 and Ser206 each carry the phosphoserine; by CK1 and CK2 modification. Residues Tyr217 and Tyr262 each carry the sulfotyrosine modification. The segment covering 228-264 (VAEEEEVAEVEEEEADDDEDDEDGDEVEEEAEEPYEE) has biased composition (acidic residues). A compositionally biased stretch (low complexity) spans 268-281 (RTTSIATTTTTTTE). Disulfide bonds link Cys291-Cys341, Cys300-Cys324, and Cys316-Cys337. In terms of domain architecture, BPTI/Kunitz inhibitor spans 291–341 (CSEQAETGPCRAMISRWYFDVTEGKCAPFFYGGCGGNRNNFDTEEYCMAVC). Heparin-binding stretches follow at residues 316 to 344 (CAPF…CGSV) and 363 to 428 (PGDE…QEAA). Sulfotyrosine is present on Tyr336. The OX-2 signature appears at 344 to 346 (VIP). The E2 domain maps to 355–546 (AVDKYLETPG…EEIQDEVDEL (192 aa)). Ser422 is modified (phosphoserine). Tyr478 carries the phosphotyrosine modification. The tract at residues 504 to 521 (AAQIRSQVMTHLRVIYER) is collagen-binding. 2 N-linked (GlcNAc...) asparagine glycosylation sites follow: Asn523 and Asn552. His658, Tyr662, His665, and His666 together coordinate Cu(2+). The Zn(2+) site is built by His658, Tyr662, His665, and His666. The interval 676-703 (VGSNKGAIIGLMVGGVVIATVIVITLVM) is interaction with PSEN1. The helical transmembrane segment at 683–703 (IIGLMVGGVVIATVIVITLVM) threads the bilayer. Residues 704–751 (LKKKQYTSIHHGVVEVDAAVTPEERHLSKMQQNGYENPTYKFFEQMQN) are Cytoplasmic-facing. Residues 705-715 (KKKQYTSIHHG) carry the Basolateral sorting signal motif. At Thr710 the chain carries Phosphothreonine. At Ser711 the chain carries Phosphoserine; by APP-kinase I. Residues 713–732 (HHGVVEVDAAVTPEERHLSK) are interaction with G(o)-alpha. Position 724 is a phosphothreonine; by CDK5 and MAPK10 (Thr724). Residues 737–751 (GYENPTYKFFEQMQN) are required for the interaction with KIF5B and for anterograde transport in axons. Position 738 is a phosphotyrosine; by ABL1 (Tyr738). The YENPXY motif; contains endocytosis signal motif lies at 738-743 (YENPTY). Lys744 participates in a covalent cross-link: Glycyl lysine isopeptide (Lys-Gly) (interchain with G-Cter in ubiquitin).

It belongs to the APP family. As to quaternary structure, binds, via its C-terminus, to the PID domain of several cytoplasmic proteins, including APBB family members, the APBA family, MAPK8IP1, SHC1 and NUMB and DAB1. Binding to DAB1 inhibits its serine phosphorylation. Interacts (via NPXY motif) with DAB2 (via PID domain); the interaction is impaired by tyrosine phosphorylation of the NPXY motif. Also interacts with GPCR-like protein BPP, APPBP1, IB1, KNS2 (via its TPR domains), APPBP2 (via BaSS) and DDB1. In vitro, it binds MAPT via the MT-binding domains. Associates with microtubules in the presence of ATP and in a kinesin-dependent manner. Interacts, through a C-terminal domain, with GNAO1. Amyloid-beta protein 42 binds CHRNA7 in hippocampal neurons. Amyloid-beta associates with HADH2. Interacts with CPEB1, ANKS1B and AGER. Interacts with ITM2B. Interacts with ITM2C. Interacts with IDE. Can form homodimers; dimerization is enhanced in the presence of Cu(2+) ions. Can form homodimers; this is promoted by heparin binding. Amyloid-beta protein 40 interacts with S100A9. CTF-alpha product of APP interacts with GSAP. Isoform APP695 interacts with SORL1 (via N-terminal ectodomain); this interaction retains APP in the trans-Golgi network and reduces processing into soluble APP-alpha and amyloid-beta peptides. Isoform APP770 interacts with SORL1. The C99 fragment also interacts with SORL1. Interacts with PLD3. Interacts with VDAC1. Interacts with NSG1; could regulate APP processing. Amyloid-beta protein 42 interacts with FPR2. Interacts (via transmembrane region) with PSEN1; the interaction is direct. Interacts with LRRK2. Interacts (via cytoplasmic domain) with KIF5B. Interacts (via C-terminus) with APBB2/FE65L1 (via C-terminus). Interacts (via intracellular domain) with APBB3. In terms of processing, proteolytically processed under normal cellular conditions. Cleavage either by alpha-secretase, beta-secretase or theta-secretase leads to generation and extracellular release of soluble APP peptides, S-APP-alpha and S-APP-beta, and the retention of corresponding membrane-anchored C-terminal fragments, C80, C83 and C99. Subsequent processing of C80 and C83 by gamma-secretase yields P3 peptides. This is the major secretory pathway and is non-amyloidogenic. Alternatively, presenilin/nicastrin-mediated gamma-secretase processing of C99 releases the amyloid-beta proteins, amyloid-beta protein 40 and amyloid-beta protein 42, major components of amyloid plaques, and the cytotoxic C-terminal fragments, gamma-CTF(50), gamma-CTF(57) and gamma-CTF(59). PSEN1 cleavage is more efficient with C83 than with C99 as substrate (in vitro). Amyloid-beta protein 40 and Amyloid-beta protein 42 are cleaved by ACE. Many other minor amyloid-beta peptides, amyloid-beta 1-X peptides, are found in cerebral spinal fluid (CSF) including the amyloid-beta X-15 peptides, produced from the cleavage by alpha-secretase. Proteolytically cleaved by caspases during neuronal apoptosis. Cleavage at Asp-720 by either caspase-3, -8 or -9 results in the production of the neurotoxic C31 peptide and the increased production of amyloid-beta peptides. Post-translationally, N- and O-glycosylated. In terms of processing, phosphorylation in the C-terminal on tyrosine, threonine and serine residues is neuron-specific. Phosphorylation can affect APP processing, neuronal differentiation and interaction with other proteins. Phosphorylated on Thr-724 in neuronal cells by Cdc5 kinase and Mapk10, in dividing cells by Cdc2 kinase in a cell-cycle dependent manner with maximal levels at the G2/M phase and, in vitro, by GSK-3-beta. The Thr-724 phosphorylated form causes a conformational change which reduces binding of Fe65 family members. In dopaminergic (DA) neurons, phosphorylation on Thr-724 by LRKK2 promotes the production and the nuclear translocation of the APP intracellular domain (AICD) which induces DA neuron apoptosis. Phosphorylation on Tyr-738 is required for SHC binding. Phosphorylated in the extracellular domain by casein kinases on both soluble and membrane-bound APP. This phosphorylation is inhibited by heparin. Trophic-factor deprivation triggers the cleavage of surface APP by beta-secretase to release sAPP-beta which is further cleaved to release an N-terminal fragment of APP (N-APP). Post-translationally, amyloid-beta peptides are degraded by IDE. In terms of processing, sulfated on tyrosine residues.

It localises to the cell membrane. It is found in the membrane. Its subcellular location is the perikaryon. The protein localises to the cell projection. The protein resides in the growth cone. It localises to the clathrin-coated pit. It is found in the early endosome. Its subcellular location is the cytoplasmic vesicle. The protein localises to the endoplasmic reticulum. The protein resides in the golgi apparatus. It localises to the secreted. It is found in the cell surface. Its subcellular location is the nucleus. The protein localises to the cytoplasm. Functions as a cell surface receptor and performs physiological functions on the surface of neurons relevant to neurite growth, neuronal adhesion and axonogenesis. Interaction between APP molecules on neighboring cells promotes synaptogenesis. Involved in cell mobility and transcription regulation through protein-protein interactions. Can promote transcription activation through binding to APBB1-KAT5 and inhibit Notch signaling through interaction with Numb. Couples to apoptosis-inducing pathways such as those mediated by G(o) and JIP. Inhibits G(o)-alpha ATPase activity. Acts as a kinesin I membrane receptor, mediating the axonal transport of beta-secretase and presenilin 1. By acting as a kinesin I membrane receptor, plays a role in axonal anterograde transport of cargo towards synapses in axons. May be involved in copper homeostasis/oxidative stress through copper ion reduction. In vitro, copper-metallated APP induces neuronal death directly or is potentiated through Cu(2+)-mediated low-density lipoprotein oxidation. Can regulate neurite outgrowth through binding to components of the extracellular matrix such as heparin and collagen I and IV. Induces a AGER-dependent pathway that involves activation of p38 MAPK, resulting in internalization of amyloid-beta peptide and mitochondrial dysfunction in cultured cortical neurons. Provides Cu(2+) ions for GPC1 which are required for release of nitric oxide (NO) and subsequent degradation of the heparan sulfate chains on GPC1. Functionally, amyloid-beta peptides are lipophilic metal chelators with metal-reducing activity. Binds transient metals such as copper, zinc and iron. Its function is as follows. The gamma-CTF peptides as well as the caspase-cleaved peptides, including C31, are potent enhancers of neuronal apoptosis. In Saimiri sciureus (Common squirrel monkey), this protein is Amyloid-beta precursor protein.